A 113-amino-acid polypeptide reads, in one-letter code: Iron-sulfur cluster insertion protein ErpA (113 aa).

Positions 41, 105, and 107 each coordinate iron-sulfur cluster.

This sequence belongs to the HesB/IscA family. Homodimer. The cofactor is iron-sulfur cluster.

Required for insertion of 4Fe-4S clusters for at least IspG. The polypeptide is Iron-sulfur cluster insertion protein ErpA (Actinobacillus succinogenes (strain ATCC 55618 / DSM 22257 / CCUG 43843 / 130Z)).